Consider the following 429-residue polypeptide: High mobility group nucleosome-binding domain-containing protein 5 (429 aa).

The disordered stretch occupies residues 1–429; sequence MPKRKAAGDA…GEKGEPVSTV (429 aa). Position 29 is a phosphothreonine (threonine 29). A compositionally biased stretch (basic residues) spans 35 to 44; the sequence is KRASTSRKTK. A Glycyl lysine isopeptide (Lys-Gly) (interchain with G-Cter in SUMO2) cross-link involves residue lysine 64. Serine 90 bears the Phosphoserine mark. Basic and acidic residues-rich tracts occupy residues 92-101 and 109-124; these read METEEVKEQI and GGEKKEAVVTKGKNDE. Lysine 98 is covalently cross-linked (Glycyl lysine isopeptide (Lys-Gly) (interchain with G-Cter in SUMO1); alternate). Lysine 98 participates in a covalent cross-link: Glycyl lysine isopeptide (Lys-Gly) (interchain with G-Cter in SUMO2); alternate. Lysine 121 is covalently cross-linked (Glycyl lysine isopeptide (Lys-Gly) (interchain with G-Cter in SUMO2)). Over residues 133 to 152 the composition is skewed to acidic residues; it reads EKDEDEKEHEDTGEEGEDGE. A compositionally biased stretch (basic and acidic residues) spans 153–195; that stretch reads REGGLKEKPDVAEIEDAKEAKDDEEKEDKEKEDDKGGDGKKEE. A compositionally biased stretch (acidic residues) spans 196–209; it reads EKDDEGEAETEEEV. Basic and acidic residues-rich tracts occupy residues 210 to 387 and 413 to 429; these read KEQQ…NEDR and NKDFKEDGEKGEPVSTV.

It belongs to the HMGN family. As to expression, expressed in trophoblast giant cells.

It localises to the nucleus. Functionally, preferentially binds to euchromatin and modulates cellular transcription by counteracting linker histone-mediated chromatin compaction. In Rattus norvegicus (Rat), this protein is High mobility group nucleosome-binding domain-containing protein 5.